A 446-amino-acid chain; its full sequence is Exodeoxyribonuclease 7 large subunit (446 aa).

This sequence belongs to the XseA family. As to quaternary structure, heterooligomer composed of large and small subunits.

It localises to the cytoplasm. It catalyses the reaction Exonucleolytic cleavage in either 5'- to 3'- or 3'- to 5'-direction to yield nucleoside 5'-phosphates.. Bidirectionally degrades single-stranded DNA into large acid-insoluble oligonucleotides, which are then degraded further into small acid-soluble oligonucleotides. The sequence is that of Exodeoxyribonuclease 7 large subunit from Streptococcus agalactiae serotype Ia (strain ATCC 27591 / A909 / CDC SS700).